A 467-amino-acid chain; its full sequence is Argininosuccinate lyase (467 aa).

Belongs to the lyase 1 family. Argininosuccinate lyase subfamily.

The protein localises to the cytoplasm. The catalysed reaction is 2-(N(omega)-L-arginino)succinate = fumarate + L-arginine. The protein operates within amino-acid biosynthesis; L-arginine biosynthesis; L-arginine from L-ornithine and carbamoyl phosphate: step 3/3. The polypeptide is Argininosuccinate lyase (Allorhizobium ampelinum (strain ATCC BAA-846 / DSM 112012 / S4) (Agrobacterium vitis (strain S4))).